The chain runs to 889 residues: Alanine--tRNA ligase (889 aa).

Residues histidine 574, histidine 578, cysteine 676, and histidine 680 each contribute to the Zn(2+) site.

Belongs to the class-II aminoacyl-tRNA synthetase family. Zn(2+) serves as cofactor.

It is found in the cytoplasm. It catalyses the reaction tRNA(Ala) + L-alanine + ATP = L-alanyl-tRNA(Ala) + AMP + diphosphate. Catalyzes the attachment of alanine to tRNA(Ala) in a two-step reaction: alanine is first activated by ATP to form Ala-AMP and then transferred to the acceptor end of tRNA(Ala). Also edits incorrectly charged Ser-tRNA(Ala) and Gly-tRNA(Ala) via its editing domain. The sequence is that of Alanine--tRNA ligase from Thermobifida fusca (strain YX).